We begin with the raw amino-acid sequence, 539 residues long: 3-methylmercaptopropionyl-CoA ligase (539 aa).

A Mg(2+)-binding site is contributed by threonine 185. Positions 231, 303, 324, 325, and 329 each coordinate ATP. Residue glutamate 330 participates in Mg(2+) binding. ATP contacts are provided by glutamine 359, aspartate 417, arginine 432, and lysine 523.

The protein belongs to the ATP-dependent AMP-binding enzyme family. Homodimer. Mg(2+) serves as cofactor.

It carries out the reaction 3-(methylsulfanyl)propanoate + ATP + CoA = 3-(methylsulfanyl)propanoyl-CoA + AMP + diphosphate. Its activity is regulated as follows. ADP acts as a competitive inhibitor and inhibits the ligase activity. Its function is as follows. Involved in the assimilation of dimethylsulphoniopropionate (DMSP), an important compound in the fixation of carbon in marine phytoplankton. Catalyzes the ATP-dependent ligation of methylmercaptopropionate (MMPA) and CoA to yield methylmercaptopropionate-CoA (MMPA-CoA). The chain is 3-methylmercaptopropionyl-CoA ligase from Ruegeria lacuscaerulensis (strain DSM 11314 / KCTC 2953 / ITI-1157) (Silicibacter lacuscaerulensis).